The chain runs to 1186 residues: MYND-type zinc finger-containing chromatin reader ZMYND8 (1186 aa).

Basic and acidic residues predominate over residues 1–12 (MDISTRSKDPGS). The segment at 1–57 (MDISTRSKDPGSAERTAQKRKFPSPPHSSNGHSPQDTSTSPIKKKKKPGLLNSNNKE) is disordered. Residues 1–850 (MDISTRSKDP…QQQQQQQNQQ (850 aa)) form a required for interaction with CCNT1 region. Ser-12 is covalently cross-linked (Glycyl lysine isopeptide (Lys-Gly) (interchain with G-Cter in SUMO2)). Ser-24 carries the phosphoserine modification. Residues Lys-56 and Lys-70 each participate in a glycyl lysine isopeptide (Lys-Gly) (interchain with G-Cter in SUMO2) cross-link. The segment at 75–268 (TDPVDVVPQD…YLAACQKRDN (194 aa)) is interaction with histone H3K4me0. An interaction with histone H3K14ac region spans residues 75-406 (TDPVDVVPQD…VKLNFDMTAS (332 aa)). A PHD-type zinc finger spans residues 88-133 (DFYCWVCHREGQVLCCELCPRVYHAKCLRLTSEPEGDWFCPECEKI). Residues 88-327 (DFYCWVCHRE…INNCYLMSKE (240 aa)) form a required for interaction with histone H3 and histone H4 region. The Zn(2+) site is built by Cys-91, Cys-94, Cys-103, Cys-106, His-111, Cys-114, Cys-127, and Cys-130. The 108-residue stretch at 145–252 (AMTMLTIEQL…KICEHEMNEI (108 aa)) folds into the Bromo domain. Zn(2+) contacts are provided by Cys-255, Cys-258, and Cys-274. Positions 277 to 327 (PHPLVWAKLKGFPFWPAKALRDKDGQVDARFFGQHDRAWVPINNCYLMSKE) constitute a PWWP domain. Residue Lys-390 forms a Glycyl lysine isopeptide (Lys-Gly) (interchain with G-Cter in SUMO2) linkage. Thr-404 carries the phosphothreonine modification. Ser-406 carries the post-translational modification Phosphoserine. Residues 412–512 (SKPVLSGGTG…TTKTDKTSTT (101 aa)) form a disordered region. Lys-413 carries the post-translational modification N6-acetyllysine; alternate. Lys-413 is covalently cross-linked (Glycyl lysine isopeptide (Lys-Gly) (interchain with G-Cter in SUMO2); alternate). Residues Ser-417, Ser-425, and Ser-432 each carry the phosphoserine modification. Polar residues predominate over residues 433–442 (PMSTNSSVHT). Ser-444 carries the phosphoserine modification. Lys-453 is covalently cross-linked (Glycyl lysine isopeptide (Lys-Gly) (interchain with G-Cter in SUMO2)). Ser-460, Ser-462, Ser-465, Ser-486, Ser-490, and Ser-495 each carry phosphoserine. Polar residues predominate over residues 472–489 (STASPASTKTGQAGSLSG). Lys-505 is covalently cross-linked (Glycyl lysine isopeptide (Lys-Gly) (interchain with G-Cter in SUMO2)). Phosphoserine occurs at positions 514 and 523. A Glycyl lysine isopeptide (Lys-Gly) (interchain with G-Cter in SUMO2) cross-link involves residue Lys-530. The residue at position 541 (Thr-541) is a Phosphothreonine. Residue Ser-547 is modified to Phosphoserine. Residue Lys-549 forms a Glycyl lysine isopeptide (Lys-Gly) (interchain with G-Cter in SUMO2) linkage. Thr-563 carries the post-translational modification Phosphothreonine. The tract at residues 582-884 (TAVEHSDSED…ITQSPSTSTI (303 aa)) is disordered. 2 stretches are compositionally biased toward basic and acidic residues: residues 585 to 597 (EHSD…KSDS) and 606 to 631 (DEQK…EPSA). Glycyl lysine isopeptide (Lys-Gly) (interchain with G-Cter in SUMO2) cross-links involve residues Lys-611 and Lys-645. Ser-652 and Ser-655 each carry phosphoserine. Residues 656-696 (EKADPGAVKDKASPEPEKDFSEKAKPSPHPIKDKLKGKDET) show a composition bias toward basic and acidic residues. Lys-657 is covalently cross-linked (Glycyl lysine isopeptide (Lys-Gly) (interchain with G-Cter in SUMO2)). 5 positions are modified to phosphoserine: Ser-668, Ser-682, Ser-707, Ser-709, and Ser-737. The segment covering 718–738 (GEDHSGREGRKNKKEPKEPSP) has biased composition (basic and acidic residues). The residue at position 746 (Thr-746) is a Phosphothreonine. Ser-754 and Ser-756 each carry phosphoserine. Low complexity predominate over residues 766–799 (SSAQTSAAGATATTSTSSTVTVTAPAPAATGSPV). The segment covering 818–832 (VWNSSSKFQTSSQKW) has biased composition (polar residues). The span at 835–857 (QKMQRQQQQQQQQNQQQQPQSSQ) shows a compositional bias: low complexity. The span at 873-884 (KEITQSPSTSTI) shows a compositional bias: polar residues. Residues 875–1047 (ITQSPSTSTI…YCCWNTSYCD (173 aa)) form a required for homodimerization region. Positions 1028, 1031, 1039, 1040, 1046, 1050, 1058, and 1062 each coordinate Zn(2+). The MYND-type zinc-finger motif lies at 1028–1062 (CANCKKEAIFYCCWNTSYCDYPCQQAHWPEHMKSC). The tract at residues 1028–1062 (CANCKKEAIFYCCWNTSYCDYPCQQAHWPEHMKSC) is required for recruitment to DNA damage sites and for interaction with the NuRD complex, CHD4, HDAC1, HDAC2 and KDM1A. The tract at residues 1071-1186 (QEADAEVNTE…KESRLDTFWD (116 aa)) is disordered. Low complexity predominate over residues 1085 to 1103 (SSQGSSSSTQSAPSETASA). The span at 1104 to 1116 (SKEKETSAEKSKE) shows a compositional bias: basic and acidic residues. Lys-1115 is covalently cross-linked (Glycyl lysine isopeptide (Lys-Gly) (interchain with G-Cter in SUMO2)). Ser-1119 is modified (phosphoserine). Residues 1121–1140 (LDLSGSRETPSSILLGSNQG) are compositionally biased toward polar residues. The residue at position 1141 (Ser-1141) is a Phosphoserine. An interaction with PRKCB1 region spans residues 1147 to 1186 (NKSSWSSSDEKRGSTRSDHNTSTSTKSLLPKESRLDTFWD). 2 stretches are compositionally biased toward basic and acidic residues: residues 1154-1165 (SDEKRGSTRSDH) and 1175-1186 (LPKESRLDTFWD).

In terms of assembly, monomer and homodimer. Interacts with NuRD subcomplexes containing GATAD2A. Interacts with the histone deacetylase NuRD complex subunit CHD4; the interaction is direct, appears to occur with monomeric ZMYND8, and is increased following DNA damage. Interacts (via N-terminus) with the P-TEFb complex subunit CCNT1 (via central region); the interaction is direct and the association appears to occur between homodimeric ZMYND8 and the activated form of the P-TEFb complex. Interacts (via N-terminus) with DBN1 (via ADF-H domain); the interaction leads to sequestering of ZMYND8 in the cytoplasm. Interacts with the P-TEFb complex subunit CDK9; the association appears to occur between homodimeric ZMYND8 and the activated form of the P-TEFb complex. Interacts with EZH2; the interaction is dependent on the presence of chromatin. Interacts (via MYND domain) with the NuRD complex subunit GATAD2A. Interacts with histone H3 (via N-terminus) that is both methylated at 'Lys-4' (H3K4me1) and acetylated at 'Lys-14' (H3K14ac), with histone H3 (via N-terminus) unmodified at 'Lys-4' (H3K4me0) and acetylated at 'Lys-14' (H3K14ac), and with histone H3 (via N-terminus) di-methylated at 'Lys-36' (H3K36me2). Interacts (via Bromo domain) with histone H4 acetylated at 'Lys-16' (H4K16ac). Interacts with HDAC1. Interacts with HDAC2. Interacts with KDM1A. Interacts with KDM5C. Interacts with KDM5D. Interacts in vitro with PRKCB. Interacts with RNA polymerase II subunit POLR2A phosphorylated at 'Ser-5'. Interacts with ZNF592. Interacts with ZNF687. Does not interact with GATAD2B. As to expression, expressed in neurons (at protein level). Absent in astrocytes (at protein level). Expressed in all tissues examined with highest expression in brain, lung, pancreas, and placenta. Expressed in cutaneous T-cell lymphomas (CTCL).

It is found in the nucleus. The protein resides in the chromosome. Its subcellular location is the cytoplasm. Chromatin reader that recognizes dual histone modifications such as histone H3.1 dimethylated at 'Lys-36' and histone H4 acetylated at 'Lys-16' (H3.1K36me2-H4K16ac) and histone H3 methylated at 'Lys-4' and histone H4 acetylated at 'Lys-14' (H3K4me1-H3K14ac). May act as a transcriptional corepressor for KDM5D by recognizing the dual histone signature H3K4me1-H3K14ac. May also act as a transcriptional corepressor for KDM5C and EZH2. Recognizes acetylated histone H4 and recruits the NuRD chromatin remodeling complex to damaged chromatin for transcriptional repression and double-strand break repair by homologous recombination. Also activates transcription elongation by RNA polymerase II through recruiting the P-TEFb complex to target promoters. Localizes to H3.1K36me2-H4K16ac marks at all-trans-retinoic acid (ATRA)-responsive genes and positively regulates their expression. Promotes neuronal differentiation by associating with regulatory regions within the MAPT gene, to enhance transcription of a protein-coding MAPT isoform and suppress the non-coding MAPT213 isoform. Suppresses breast cancer, and prostate cancer cell invasion and metastasis. This is MYND-type zinc finger-containing chromatin reader ZMYND8 (ZMYND8) from Homo sapiens (Human).